The following is a 594-amino-acid chain: Alanine--tRNA ligase (594 aa).

Zn(2+) contacts are provided by His-456, His-460, Cys-558, and His-562.

Belongs to the class-II aminoacyl-tRNA synthetase family. Zn(2+) is required as a cofactor.

It is found in the cytoplasm. It carries out the reaction tRNA(Ala) + L-alanine + ATP = L-alanyl-tRNA(Ala) + AMP + diphosphate. In terms of biological role, catalyzes the attachment of alanine to tRNA(Ala) in a two-step reaction: alanine is first activated by ATP to form Ala-AMP and then transferred to the acceptor end of tRNA(Ala). Also edits incorrectly charged Ser-tRNA(Ala) and Gly-tRNA(Ala) via its editing domain. This is Alanine--tRNA ligase (alaS) from Borreliella burgdorferi (strain ATCC 35210 / DSM 4680 / CIP 102532 / B31) (Borrelia burgdorferi).